A 947-amino-acid chain; its full sequence is Vacuolar membrane protease (947 aa).

Residues 1–15 (MRFKALLRAIFRFRK) lie on the Cytoplasmic side of the membrane. A helical membrane pass occupies residues 16–36 (TNFSILLIITYAIIIALLVFD). Topologically, residues 37–358 (RSRYKLDLPN…GLFFVVVDTK (322 aa)) are vacuolar. N-linked (GlcNAc...) asparagine glycosylation is found at Asn46, Asn92, Asn108, and Asn121. Residues His156 and Asp168 each contribute to the Zn(2+) site. The Proton acceptor role is filled by Glu200. 3 residues coordinate Zn(2+): Glu201, Glu226, and His300. N-linked (GlcNAc...) asparagine glycosylation occurs at Asn319. A helical transmembrane segment spans residues 359 to 379 (HLFYADIFMLIVGPILLMMKA). Residues 380–391 (HLDKRRRLERSR) are Cytoplasmic-facing. The chain crosses the membrane as a helical span at residues 392 to 412 (LVQLRLLLSLGLSVVFLLLLT). Residues 413 to 428 (KSLNSFNPFVYSADYR) are Vacuolar-facing. The chain crosses the membrane as a helical span at residues 429–449 (TPLTGLFLLFVTVNYLIVTLA). Residues 450–458 (ERLNPTESY) are Cytoplasmic-facing. Residues 459-479 (KTVAINQIFIIAWLMQLYITL) form a helical membrane-spanning segment. The Vacuolar segment spans residues 480–489 (RMAKSDFTLT). Residues 490-510 (GTYPLSIFSGCLIVALSLGLF) traverse the membrane as a helical segment. Residues 511–601 (GTKNKAVNDA…DKNSDFSKHY (91 aa)) lie on the Cytoplasmic side of the membrane. Composition is skewed to polar residues over residues 522 to 531 (NSSVRYASSQ) and 546 to 567 (NINQVRDTGNQEVTSNTNTDLH). The tract at residues 522–573 (NSSVRYASSQNDEDNPLPSQDRGENINQVRDTGNQEVTSNTNTDLHSNAEEV) is disordered. The helical transmembrane segment at 602 to 622 (NWIVQFLCIVPISSFIFLFSL) threads the bilayer. At 623–641 (DYTLDAIHKMVQETTDDVQ) the chain is on the vacuolar side. The helical transmembrane segment at 642 to 662 (LICIIITIGVILLALPILPFI) threads the bilayer. The Cytoplasmic portion of the chain corresponds to 663–669 (SKLNYQS). Residues 670–690 (SVIIAIIGVLLFGKSLVMQPF) traverse the membrane as a helical segment. Residues 691–947 (SEIAPLKVRF…LVVIKDKIQL (257 aa)) are Vacuolar-facing. Residues Asn742, Asn784, Asn801, and Asn833 are each glycosylated (N-linked (GlcNAc...) asparagine).

The protein belongs to the peptidase M28 family. The cofactor is Zn(2+).

The protein resides in the vacuole membrane. May be involved in vacuolar sorting and osmoregulation. The polypeptide is Vacuolar membrane protease (Candida glabrata (strain ATCC 2001 / BCRC 20586 / JCM 3761 / NBRC 0622 / NRRL Y-65 / CBS 138) (Yeast)).